Consider the following 67-residue polypeptide: Mitotic-spindle organizing protein 1A (67 aa).

It belongs to the MOZART1 family. As to quaternary structure, part of the gamma-tubulin complex. Interacts with GIP1 and GCP3. As to expression, mostly expressed in siliques and flowers, and, to a lower extent, in leaves, roots and seedlings, with highest levels in young tissues, meristematic cells, and the vasculature.

The protein resides in the cytoplasm. Its subcellular location is the cytoskeleton. It localises to the microtubule organizing center. The protein localises to the spindle. It is found in the nucleus. The protein resides in the phragmoplast. Its subcellular location is the nucleus envelope. Required for gamma-tubulin complex recruitment to the microtubule organizing centers (MTOCs). During mitosis, modulates gamma-tubulin complex localization, spindle stability and chromosomal segregation. Necessary for gametophyte development and embryogenesis. This is Mitotic-spindle organizing protein 1A (GIP2) from Arabidopsis thaliana (Mouse-ear cress).